The sequence spans 197 residues: Ribosomal RNA large subunit methyltransferase E (197 aa).

S-adenosyl-L-methionine is bound by residues Gly50, Trp52, Asp70, Asp88, and Asp111. The active-site Proton acceptor is the Lys151.

This sequence belongs to the class I-like SAM-binding methyltransferase superfamily. RNA methyltransferase RlmE family.

The protein resides in the cytoplasm. The catalysed reaction is uridine(2552) in 23S rRNA + S-adenosyl-L-methionine = 2'-O-methyluridine(2552) in 23S rRNA + S-adenosyl-L-homocysteine + H(+). Its function is as follows. Specifically methylates the uridine in position 2552 of 23S rRNA at the 2'-O position of the ribose in the fully assembled 50S ribosomal subunit. The chain is Ribosomal RNA large subunit methyltransferase E from Syntrophobacter fumaroxidans (strain DSM 10017 / MPOB).